Reading from the N-terminus, the 606-residue chain is Putative amino acid transporter AAT1 (606 aa).

Residues 1–156 are disordered; that stretch reads MNKKYGTSSN…DEEGTNKPKR (156 aa). Basic and acidic residues-rich tracts occupy residues 12 to 25 and 72 to 89; these read HDNK…ADKN and SDKK…ESSK. A compositionally biased stretch (acidic residues) spans 140-149; sequence SDGDYTNDEE. The next 11 membrane-spanning stretches (helical) occupy residues 175–194, 200–225, 246–271, 283–301, 313–332, 352–372, 393–412, 428–449, 522–539, 545–567, and 579–605; these read TVLF…PYVF, ILSI…TSSL, TIID…SNFL, LFTN…ILPI, FLIF…GLQT, HFFK…NACF, VILQ…FSFL, VSIL…PLNF, MWIS…ACKV, VIGI…LIYY, and RYST…LNLI.

It belongs to the amino acid/polyamine transporter 2 family.

The protein resides in the vacuole membrane. In terms of biological role, putative amino acid transporter. Probably transports tryptophan. Involved in maintaining the osmotic homeostasis of the digestive vacuole. Important for the timely development and growth of the asexual-stage parasites and male gametocyte maturation. In Plasmodium falciparum (isolate 3D7), this protein is Putative amino acid transporter AAT1.